We begin with the raw amino-acid sequence, 760 residues long: MTISPPESGEKDKKILESPVKADPRPIDFAKLDKPGFWSSKLSKGPKTTTWIWNLHADAHDFDVHTGDAEEATRKIFSAHFGHLAVIFIWMSAAFFHGARFSNYSGWLADPTHVKPGAQQVWAIVGQEMLNGDLGANYNGIQISSGVFHMWRAWGITNESELMALAIGAVVMAALMLHAGIFHYHKAAPKMEWFQDVESMMNHHLAGLLGLGSLAWAGHTIHIGAPTAALLDAIDAGSPLIINGKEIATIADIPMPHQLCDPQIVGQIFPGLASGTGNFFSLNWFAFSDFLTFKGGLNPVTGSLWMTDIAHHHLAIAVLFIIAGHMYRTNYGIGHSMKEILDAHQGDPILFPAPRGHQGLFDFMAESRHAQLSVNLALLGSLSIIISHHMYAMPPYPYIATDYMTVLGLFTHHMWIGGLFIVGAGAHAGIAMVRDYDPAKHIDNVLDRVLKARDALISHLNWVCMWLGFHSFGLYIHNDTMRALGRPQDMFSDKAIQLQPIFAQWIQNIQSSGVGTTLLEGNGVSQVFNGETISVGGKVAMTGIPLGTADLMIHHIHAFQIHVTVLILLKGVLYARSSRLIPDKASLGFRFPCDGPGRGGTCQVSSWDHVFLALFWMYNCLSIVIFHFSWKMQSDVWGLTGGNFAQSAITINGWLRDFLWAQAAQVLTSYGQSISMYGLMFLGAHFIWAFSLMFLFSGRGYWQELFESIVWAHNKLKVAPTIQPRALSITQGRAVGVTHFLVGGIATTWAFFHARLFGIG.

The disordered stretch occupies residues 1–22 (MTISPPESGEKDKKILESPVKA). The segment covering 8–22 (SGEKDKKILESPVKA) has biased composition (basic and acidic residues). Transmembrane regions (helical) follow at residues 76-99 (IFSAHFGHLAVIFIWMSAAFFHGA), 162-185 (LMALAIGAVVMAALMLHAGIFHYH), 201-225 (MNHHLAGLLGLGSLAWAGHTIHIGA), 309-327 (IAHHHLAIAVLFIIAGHMY), 368-391 (RHAQLSVNLALLGSLSIIISHHMY), 407-433 (LGLFTHHMWIGGLFIVGAGAHAGIAMV), 455-477 (ALISHLNWVCMWLGFHSFGLYIH), and 551-569 (LMIHHIHAFQIHVTVLILL). [4Fe-4S] cluster-binding residues include Cys593 and Cys602. 2 helical membrane passes run 609 to 630 (HVFLALFWMYNCLSIVIFHFSW) and 674 to 696 (ISMYGLMFLGAHFIWAFSLMFLF). Position 685 (His685) interacts with divinylchlorophyll a'. The divinyl chlorophyll a site is built by Met693 and Tyr701. Position 702 (Trp702) interacts with phylloquinone. The helical transmembrane segment at 734-754 (AVGVTHFLVGGIATTWAFFHA) threads the bilayer.

The protein belongs to the PsaA/PsaB family. The PsaA/B heterodimer binds the P700 divinyl chlorophyll special pair and subsequent electron acceptors. PSI consists of a core antenna complex that captures photons, and an electron transfer chain that converts photonic excitation into a charge separation. The cyanobacterial PSI reaction center is composed of one copy each of PsaA,B,C,D,E,F,I,J,K,L,M and X, and forms trimeric complexes. PSI electron transfer chain: 5 divinyl chlorophyll a, 1 divinyl chlorophyll a', 2 phylloquinones and 3 4Fe-4S clusters. PSI core antenna: 90 divinyl chlorophyll a, 22 carotenoids, 3 phospholipids and 1 galactolipid. P700 is a divinyl chlorophyll a/divinyl chlorophyll a' dimer, A0 is one or more divinyl chlorophyll a, A1 is one or both phylloquinones and FX is a shared 4Fe-4S iron-sulfur center. is required as a cofactor.

The protein localises to the cellular thylakoid membrane. It carries out the reaction reduced [plastocyanin] + hnu + oxidized [2Fe-2S]-[ferredoxin] = oxidized [plastocyanin] + reduced [2Fe-2S]-[ferredoxin]. PsaA and PsaB bind P700, the primary electron donor of photosystem I (PSI), as well as the electron acceptors A0, A1 and FX. PSI is a plastocyanin/cytochrome c6-ferredoxin oxidoreductase, converting photonic excitation into a charge separation, which transfers an electron from the donor P700 chlorophyll pair to the spectroscopically characterized acceptors A0, A1, FX, FA and FB in turn. Oxidized P700 is reduced on the lumenal side of the thylakoid membrane by plastocyanin or cytochrome c6. The protein is Photosystem I P700 chlorophyll a apoprotein A1 of Prochlorococcus marinus (strain MIT 9515).